We begin with the raw amino-acid sequence, 526 residues long: Vang-like protein 2 (526 aa).

The segment at 1 to 95 is disordered; that stretch reads MDNESQYSGY…NEDLTRASKE (95 aa). Residues 1-109 are Cytoplasmic-facing; sequence MDNESQYSGY…SPLECRRFAG (109 aa). Residues 15–33 show a composition bias toward basic residues; it reads SHSRSSRKHRDRRDRHRSK. Composition is skewed to basic and acidic residues over residues 34–43 and 58–68; these read SRDSSSRGDK and ESTRGDDRDDN. Positions 70 to 83 are enriched in low complexity; it reads GETTTVVTGTSEHS. A compositionally biased stretch (basic and acidic residues) spans 84–95; the sequence is VSNEDLTRASKE. Residues 110-130 traverse the membrane as a helical segment; it reads PIVSGVLGLFALLTPLAFLLL. At 131–148 the chain is on the extracellular side; it reads PQLLWRDSLEPCGTPCEG. A helical transmembrane segment spans residues 149-169; it reads LYVSLAFKLLVLLISSWALFL. Residues 170-178 lie on the Cytoplasmic side of the membrane; the sequence is RPSRSTLPR. A helical membrane pass occupies residues 179 to 199; the sequence is FFVFRCLLMALVFLFVASYWL. Residues 200–215 lie on the Extracellular side of the membrane; that stretch reads FYGVRVLEPRERDYRG. A helical transmembrane segment spans residues 216 to 236; it reads IVGYAVSLVDALLFIQYLALV. Residues 237–526 are Cytoplasmic-facing; the sequence is LLEVRHLRPA…VMRLQSETSV (290 aa). The short motif at 523–526 is the PDZ-binding element; the sequence is ETSV.

This sequence belongs to the Vang family. As to quaternary structure, interacts with the PDZ domain of dvl2/dsh. Ubiquitously expressed at the 4-cell stage. In early somitogenesis, becomes more abundant in anterior neural tissue where expression is seen in the neural tube but not in the notochord.

The protein localises to the cell membrane. Its function is as follows. Plays a role in non-canonical Wnt/planar cell polarity (PCP) signaling to regulate convergent extension cell movements during gastrulation. Acts together with scrib and prickle1 and localizes prickle1 and dvl2/dsh to the plasma membrane. Has an overlapping role with kny during both convergent extension and eye development. In the eye, involved in establishing proper alignment of the anterior neural plate and midline cells expressing shha and shhb/twhh. Has indirect effects on a number of other developmental processes including notochord shape formation, neural progenitor cell morphogenesis, segregation of somites and adaxial cell development. Together with prickle1, required for the posterior (caudal) movement of branchiomotor neurons in the hindbrain independently of, and a few hours after, convergent extension. May be required for cell surface localization of fzd3 and fzd6 in the inner ear. In Danio rerio (Zebrafish), this protein is Vang-like protein 2.